A 515-amino-acid polypeptide reads, in one-letter code: 2,3-bisphosphoglycerate-independent phosphoglycerate mutase (515 aa).

Aspartate 14 and serine 64 together coordinate Mn(2+). Residue serine 64 is the Phosphoserine intermediate of the active site. Residues histidine 125, 155 to 156 (RD), arginine 187, arginine 193, 263 to 266 (RADR), and lysine 337 each bind substrate. Residues aspartate 404, histidine 408, aspartate 445, histidine 446, and histidine 464 each coordinate Mn(2+).

This sequence belongs to the BPG-independent phosphoglycerate mutase family. Monomer. The cofactor is Mn(2+).

It carries out the reaction (2R)-2-phosphoglycerate = (2R)-3-phosphoglycerate. It participates in carbohydrate degradation; glycolysis; pyruvate from D-glyceraldehyde 3-phosphate: step 3/5. Catalyzes the interconversion of 2-phosphoglycerate and 3-phosphoglycerate. This is 2,3-bisphosphoglycerate-independent phosphoglycerate mutase from Cronobacter sakazakii (strain ATCC BAA-894) (Enterobacter sakazakii).